We begin with the raw amino-acid sequence, 397 residues long: Tryptophan synthase beta chain (397 aa).

At Lys-91 the chain carries N6-(pyridoxal phosphate)lysine.

It belongs to the TrpB family. Tetramer of two alpha and two beta chains. Requires pyridoxal 5'-phosphate as cofactor.

It carries out the reaction (1S,2R)-1-C-(indol-3-yl)glycerol 3-phosphate + L-serine = D-glyceraldehyde 3-phosphate + L-tryptophan + H2O. Its pathway is amino-acid biosynthesis; L-tryptophan biosynthesis; L-tryptophan from chorismate: step 5/5. The beta subunit is responsible for the synthesis of L-tryptophan from indole and L-serine. This is Tryptophan synthase beta chain from Bacillus cereus (strain ZK / E33L).